Consider the following 92-residue polypeptide: MELNILNKTNNELEVELRGETHTLLNLLKDLLIKDERVVTAFYDMKYVSISDPVLYIKTDGADPILVLKDVVAIIVSECDEFIDVFSKAANA.

It belongs to the archaeal Rpo11/eukaryotic RPB11/RPC19 RNA polymerase subunit family. As to quaternary structure, part of the RNA polymerase complex.

The protein localises to the cytoplasm. The catalysed reaction is RNA(n) + a ribonucleoside 5'-triphosphate = RNA(n+1) + diphosphate. Functionally, DNA-dependent RNA polymerase (RNAP) catalyzes the transcription of DNA into RNA using the four ribonucleoside triphosphates as substrates. This Methanosarcina mazei (strain ATCC BAA-159 / DSM 3647 / Goe1 / Go1 / JCM 11833 / OCM 88) (Methanosarcina frisia) protein is DNA-directed RNA polymerase subunit Rpo11.